The chain runs to 201 residues: Lipopolysaccharide core heptose(II)-phosphate phosphatase (201 aa).

The N-terminal stretch at 1-35 (MLAFTLRFIKNKRYLATLAGALVIIAGLTSQHAWS) is a signal peptide.

It belongs to the phosphoglycerate mutase family. Ais subfamily.

Its subcellular location is the periplasm. It functions in the pathway bacterial outer membrane biogenesis; lipopolysaccharide metabolism. In terms of biological role, catalyzes the dephosphorylation of heptose(II) of the outer membrane lipopolysaccharide core. The chain is Lipopolysaccharide core heptose(II)-phosphate phosphatase from Salmonella newport (strain SL254).